Consider the following 467-residue polypeptide: Transcriptional regulator of yeast form adherence 6 (467 aa).

The segment covering 43–52 (NTSDAGSIPT) has biased composition (polar residues). 5 disordered regions span residues 43-83 (NTSD…NIDS), 128-149 (GSSGGSATPTSSTKKASTNSNN), 245-275 (ESPETIIEENEPVSETSSTNNTTTLHYSNSS), 312-365 (NNQL…SGSK), and 390-439 (STLN…DNDR). The 82-residue stretch at 92–173 (ETKQLHSIIE…KSSVEYILYL (82 aa)) folds into the bHLH domain. 2 stretches are compositionally biased toward low complexity: residues 257-275 (VSETSSTNNTTTLHYSNSS) and 312-322 (NNQLNNRKNSN). Residues 323-338 (PISPQTVCIKSQNPSP) show a composition bias toward polar residues. Low complexity predominate over residues 345–365 (SSLSTSIVNSPSSSSSLSGSK). Polar residues predominate over residues 417 to 432 (GSANTETVNSGSASSD).

It is found in the nucleus. In terms of biological role, transcription factor required for yeast cell adherence to silicone substrate. This is Transcriptional regulator of yeast form adherence 6 (TRY6) from Candida albicans (strain SC5314 / ATCC MYA-2876) (Yeast).